The chain runs to 227 residues: E3 ubiquitin-protein ligase RNF186 (227 aa).

The RING-type zinc finger occupies 40–86 (CLVCREPYSCPRLPKLLACQHAFCAICLKLLLCVQDNTWSITCPLCR). Transmembrane regions (helical) follow at residues 158–178 (HLLL…PGVL) and 180–200 (WVLT…CCLP).

As to quaternary structure, interacts with BNIP1. In terms of processing, polyubiquitinated. 'Lys-29'-linked autoubiquitination leads to proteasomal degradation.

Its subcellular location is the endoplasmic reticulum membrane. The enzyme catalyses S-ubiquitinyl-[E2 ubiquitin-conjugating enzyme]-L-cysteine + [acceptor protein]-L-lysine = [E2 ubiquitin-conjugating enzyme]-L-cysteine + N(6)-ubiquitinyl-[acceptor protein]-L-lysine.. It functions in the pathway protein modification; protein ubiquitination. E3 ubiquitin protein ligase that is part of an apoptotic signaling pathway activated by endoplasmic reticulum stress. Stimulates the expression of proteins specific of the unfolded protein response (UPR), ubiquitinates BNIP1 and regulates its localization to the mitochondrion and induces calcium release from the endoplasmic reticulum that ultimately leads to cell apoptosis. Plays a role in the maintenance of intestinal homeostasis and clearance of enteric pathogens. Upon NOD2 stimulation, ubiquitinates the ER stress sensor activating transcription factor 6/ATF6 and promotes the unfolded protein response UPR. Participates in basal level of autophagy maintenance by regulating the ubiquitination of EPHB2 and EPHB3. Upon stimulation by ligand EFNB1, ubiquitinates EPHB2 and further recruits MAP1LC3B for autophagy induction. Controls nutrient sensing by ubiquitinating Sestrin-2/SESN2, which is an intracellular sensor of cytosolic leucine and inhibitor of mTORC1 activity. The chain is E3 ubiquitin-protein ligase RNF186 from Homo sapiens (Human).